The chain runs to 641 residues: Choline O-acetyltransferase (641 aa).

The tract at residues 1–29 (MPILEKTPPKMAAKSPSSEEEPGLPKLPV) is disordered. The residue at position 17 (S17) is a Phosphoserine. H335 (proton acceptor) is an active-site residue. S366 carries the post-translational modification Phosphoserine. Residues 413-425 (GKTF…CSPD), S451, and Q552 each bind CoA. A disordered region spans residues 619-641 (QSGMGKPLATKEKVTRPSQVHQP).

This sequence belongs to the carnitine/choline acetyltransferase family.

It catalyses the reaction choline + acetyl-CoA = acetylcholine + CoA. Its function is as follows. Catalyzes the reversible synthesis of acetylcholine (ACh) from acetyl CoA and choline at cholinergic synapses. This chain is Choline O-acetyltransferase (CHAT), found in Sus scrofa (Pig).